Here is a 123-residue protein sequence, read N- to C-terminus: Loki profilin-3 (123 aa).

Belongs to the Asgard profilin family.

It localises to the cytoplasm. The protein localises to the cytoskeleton. Functionally, binds to actin and affects the structure of the cytoskeleton. At high concentrations inhibits spontaneous rabbit actin nucleation. This strongly suggests this archaea has a profilin-regulated actin system, and actin-type genes can be identified in this organism. This Lokiarchaeum sp. (strain GC14_75) protein is Loki profilin-3.